Reading from the N-terminus, the 387-residue chain is Methyltransferase phomM' (387 aa).

The tract at residues Pro98–Leu223 is methyltransferase domain.

Belongs to the class I-like SAM-binding methyltransferase superfamily. Erg6/SMT family.

It participates in mycotoxin biosynthesis. Functionally, methyltransferase; part of the gene cluster that mediates the biosynthesis of the phomopsins, a group of hexapeptide mycotoxins which infects lupins and causes lupinosis disease in livestock. Within the pathway, phomM' acts as an S-adenosylmethionine-dependent alpha-N-methyltransferase that catalyzes two successive N-methylation reactions, converting N-desmethyl-phomopsin A to phomopsin A and phomopsin A further to an N,N-dimethylated congener called phomopsin E. The pathway starts with the processing of the precursor phomA' by several endopeptidases including kexin proteases as well as the cluster-specific S41 family peptidase phomP1 and the oligopeptidase phomG' to produce 10 identical copies of the hexapeptide Tyr-Val-Ile-Pro-Ile-Asp. After being excised from the precursor peptide, the core peptides are cyclized and modified post-translationally by enzymes encoded within the gene cluster. The timing and order of proteolysis of the phomA' precursor and PTMs are still unknown. Two tyrosinase-like enzymes, phomQ1' and phomQ2, catalyze the chlorination and hydroxylation of Tyr, respectively. PhomYb, is proposed to be involved in the construction of the macrocyclic structure. The other 4 ustYa family proteins may be involved in PTMs that generate the unique structure of phomopsin A. PhomYa' is required for the hydroxylation of C-beta of Tyr. PhomYc', phomYd', and phomYe are responsible for the biosynthesis of 2,3-dehydroisoleucine (dIle), 2,3-dehydroaspartic acid (dAsp), and 3,4-dehydroproline (dPro), respectively. While dIle formation by phomYc' is indispensable for the installation of dAsp by phomYd', the order of the other PTMs have not been elucidated yet. Most of the biosynthetic enzymes likely have broad substrate specificity, and thus, there might be a metabolic grid from a precursor to phomopsin A. The enzyme(s) responsible for the biosynthesis of 3,4-dehydrovaline (dVal) have also not been identified yet. Finally, phomM' acts as an S-adenosylmethionine-dependent alpha-N-methyltransferase that catalyzes two successive N-methylation reactions, converting N-desmethyl-phomopsin A to phomopsin A and phomopsin A further to an N,N-dimethylated congener called phomopsin E. The sequence is that of Methyltransferase phomM' from Diaporthe leptostromiformis (Lupinosis disease fungus).